The primary structure comprises 507 residues: Glycerol kinase 2 (507 aa).

T16 provides a ligand contact to ADP. Residues T16, T17, and S18 each coordinate ATP. T16 contacts sn-glycerol 3-phosphate. Position 20 (R20) interacts with ADP. Sn-glycerol 3-phosphate-binding residues include R86, E87, Y138, and D248. Residues R86, E87, Y138, D248, and Q249 each coordinate glycerol. ADP contacts are provided by T270 and G314. ATP-binding residues include T270, G314, Q318, and G415. ADP-binding residues include G415 and N419.

This sequence belongs to the FGGY kinase family.

The enzyme catalyses glycerol + ATP = sn-glycerol 3-phosphate + ADP + H(+). The protein operates within polyol metabolism; glycerol degradation via glycerol kinase pathway; sn-glycerol 3-phosphate from glycerol: step 1/1. With respect to regulation, inhibited by fructose 1,6-bisphosphate (FBP). Its function is as follows. Key enzyme in the regulation of glycerol uptake and metabolism. Catalyzes the phosphorylation of glycerol to yield sn-glycerol 3-phosphate. This Streptomyces avermitilis (strain ATCC 31267 / DSM 46492 / JCM 5070 / NBRC 14893 / NCIMB 12804 / NRRL 8165 / MA-4680) protein is Glycerol kinase 2.